A 334-amino-acid chain; its full sequence is Non-functional pseudokinase ZED1 (334 aa).

Residues 49–334 (FSESRIISSW…KELKLIEKLS (286 aa)) enclose the Protein kinase domain. ATP is bound by residues 55 to 63 (ISSWGYFIW) and lysine 76. An O-acetylthreonine mark is found at threonine 125 and threonine 177.

It belongs to the protein kinase superfamily. Ser/Thr protein kinase family. ZRK subfamily. As to quaternary structure, interacts with RPP13L4/ZAR1. Component of an immune signaling complex made of, at least, SZE1, BKN2/SZE2, ZAR1 and ZED1. Binds directly to SZE1 at the plasma membrane. As to expression, expressed in seedlings, young leaves, floral organs, shoot apical meristems (SAM) and inflorescence stems.

Its subcellular location is the cytoplasm. It is found in the cytosol. The protein localises to the nucleus. It localises to the cell membrane. Together with RPP13L4/ZAR1, involved in the ambient temperature (above 22 degrees Celsius)-sensitive aerial organ development. Together with RPP13L4/ZAR1, involved in the regulation of the ambient temperature-sensitive intersection of growth and immune response in the absence of pathogens, by repressing the transcription of SNC1. Probable non-functional kinase required for recognition of the Pseudomonas syringae type III effector HopZ1a by RPP13L4/ZAR1 and, together with SZE1 and SZE2, to trigger subsequent defense responses. May function as a decoy to trap HopZ1a in the ZAR1 complex for recognition by the plant immune system. The protein is Non-functional pseudokinase ZED1 of Arabidopsis thaliana (Mouse-ear cress).